A 110-amino-acid chain; its full sequence is Bowman-Birk type proteinase inhibitor (110 aa).

The first 28 residues, Met1–Ala28, serve as a signal peptide directing secretion. Residues Arg29–Asn42 constitute a propeptide that is removed on maturation. 7 disulfides stabilise this stretch: Cys50-Cys103, Cys51-Cys66, Cys54-Cys99, Cys56-Cys64, Cys73-Cys80, Cys77-Cys92, and Cys82-Cys90.

As to quaternary structure, monomer.

Inhibitor of trypsin and of chymotrypsin. This Lens culinaris (Lentil) protein is Bowman-Birk type proteinase inhibitor.